We begin with the raw amino-acid sequence, 365 residues long: Alternative oxidase 2, mitochondrial (365 aa).

Positions T32 to A46 are enriched in low complexity. The segment at T32–H52 is disordered. The Fe cation site is built by E166, E205, and H208. A helical membrane pass occupies residues W220–L242. The Fe cation site is built by E256, E257, E312, and H315. The interval Q345–L365 is disordered.

The protein belongs to the alternative oxidase family. The cofactor is Fe cation.

It localises to the mitochondrion inner membrane. Its function is as follows. Catalyzes cyanide-resistant oxygen consumption. May increase respiration when the cytochrome respiratory pathway is restricted, or in response to low temperatures. This chain is Alternative oxidase 2, mitochondrial (AOX2), found in Candida albicans (Yeast).